The sequence spans 276 residues: Diaminopimelate epimerase (276 aa).

Asn-13, Gln-46, and Asn-66 together coordinate substrate. Residue Cys-75 is the Proton donor of the active site. Substrate-binding positions include 76 to 77 (GN), Asn-159, Asn-192, and 210 to 211 (ER). Catalysis depends on Cys-219, which acts as the Proton acceptor. 220 to 221 (GS) provides a ligand contact to substrate.

The protein belongs to the diaminopimelate epimerase family. In terms of assembly, homodimer.

It is found in the cytoplasm. The enzyme catalyses (2S,6S)-2,6-diaminopimelate = meso-2,6-diaminopimelate. The protein operates within amino-acid biosynthesis; L-lysine biosynthesis via DAP pathway; DL-2,6-diaminopimelate from LL-2,6-diaminopimelate: step 1/1. Its function is as follows. Catalyzes the stereoinversion of LL-2,6-diaminopimelate (L,L-DAP) to meso-diaminopimelate (meso-DAP), a precursor of L-lysine and an essential component of the bacterial peptidoglycan. This chain is Diaminopimelate epimerase, found in Vibrio vulnificus (strain CMCP6).